The chain runs to 639 residues: MNRFTAYAALFFMFSLCSTAKEAGFLHPAFNFRGTSTMSASSGDYSAAPTPLYKSWALPSSLNLTTQPPPPLTDRSYYELVQALTSKMRLDCQTVGDMTWRHLSEMLFASWNSVKEVSLKAASVTLWAIINIWFGLYWTLARLITLFLWTFSIEALCLILLGCITSLIYKGALSLSEHLPVFLFMSPLKIIWRAAFSKRNYKNERAVEGYKGFSVPQKPPKSAVIELQHENGSHLGYANCIRLYSGENALVTAEHCLEGAFATSLKTGNRIPMSTFFPIFKSARNDISILVGPPNWEGLLSVKGAHFITADKIGKGPASFYTLEKGEWMCHSATIDGAHHQFVSVLCNTGPGYSGTGFWSSKNLLGVLKGFPLEEECNYNVMSVIPSIPGITSPNYVFESTAVKGRVFSDEAVKELEREASEAVKKLARFKSLTDKNWADDYDSDEDYGLEREAATNAPAEKTAQTNSAEKTAPSTSAEKTALTNKPLNGQAAPSAKTNGNSDIPDAATSAPPMDKMVEQIITAMVGRINLSEIEEKIVSRVSQKALQKPKQKKRGRRGGKNKQNSLPPTSTQSTSGAPKKEAAPQASGSAGTSRATTTPAPEAKPSGGKNSAKFTPSWRIKQQDSAGQKPDLKLNSKA.

The signal sequence occupies residues 1–20 (MNRFTAYAALFFMFSLCSTA). 3 helical membrane-spanning segments follow: residues 121-141 (AASVTLWAIINIWFGLYWTLA), 144-164 (ITLFLWTFSIEALCLILLGCI), and 172-192 (ALSLSEHLPVFLFMSPLKIIW). In terms of domain architecture, Peptidase S39 spans 207-399 (VEGYKGFSVP…GITSPNYVFE (193 aa)). Residues His255, Asp286, and Ser354 each act as for protease activity in the active site. Disordered stretches follow at residues 455 to 515 (ATNA…PPMD) and 539 to 639 (VSRV…NSKA). The segment covering 463 to 488 (TAQTNSAEKTAPSTSAEKTALTNKPL) has biased composition (polar residues). Positions 548 to 561 (QKPKQKKRGRRGGK) are enriched in basic residues. The span at 566 to 577 (SLPPTSTQSTSG) shows a compositional bias: polar residues. Positions 587–602 (ASGSAGTSRATTTPAP) are enriched in low complexity.

This sequence belongs to the peptidase S39B family. Specific enzymatic cleavages in vivo yield mature proteins. The protease probably cleaves itself and releases the VPg protein. The VPg protein is probably further cleaved in its C-terminus.

The protein resides in the membrane. Its function is as follows. Precursor from which the VPg molecule is probably released at the onset of the RNA synthesis. Essential for virus replication. Participates, together with the proteins P0 and P7, in the inhibition of the induction of aphid-induced host phytohormones. This could play a role in the attraction to the infected plants by aphids. The chain is Protein P1 from Solanum tuberosum (Potato).